A 277-amino-acid polypeptide reads, in one-letter code: Alternative cytochrome c oxidase subunit 2 (277 aa).

Topologically, residues 1–40 (MAVALILLLIAIGSVLFHLFSPWWWTPIATNWGYIDDTIN) are periplasmic. A helical transmembrane segment spans residues 41–61 (ITFWITGFVFTAVILFMAYCV). Over 62-83 (FRFHHKEGRQAAYNPENKKLEW) the chain is Cytoplasmic. A helical membrane pass occupies residues 84–104 (WLSVGTGVGVAAMLAPGLVVW). Topologically, residues 105–277 (HQFVTVPADA…VRAKYNSGDD (173 aa)) are periplasmic. Residues His-190, Cys-225, Cys-229, and His-233 each coordinate Cu cation.

This sequence belongs to the cytochrome c oxidase subunit 2 family.

It localises to the cell membrane. The catalysed reaction is 4 Fe(II)-[cytochrome c] + O2 + 8 H(+)(in) = 4 Fe(III)-[cytochrome c] + 2 H2O + 4 H(+)(out). Functionally, cytochrome c oxidase is the component of the respiratory chain that catalyzes the reduction of oxygen to water. Subunits 1-3 form the functional core of the enzyme complex. Subunit 2 transfers the electrons from cytochrome c via its binuclear copper A center to the bimetallic center of the catalytic subunit 1. This Bradyrhizobium diazoefficiens (strain JCM 10833 / BCRC 13528 / IAM 13628 / NBRC 14792 / USDA 110) protein is Alternative cytochrome c oxidase subunit 2 (coxM).